A 180-amino-acid chain; its full sequence is Translation initiation factor IF-3 (180 aa).

The protein belongs to the IF-3 family. Monomer.

Its subcellular location is the cytoplasm. In terms of biological role, IF-3 binds to the 30S ribosomal subunit and shifts the equilibrium between 70S ribosomes and their 50S and 30S subunits in favor of the free subunits, thus enhancing the availability of 30S subunits on which protein synthesis initiation begins. In Caldanaerobacter subterraneus subsp. tengcongensis (strain DSM 15242 / JCM 11007 / NBRC 100824 / MB4) (Thermoanaerobacter tengcongensis), this protein is Translation initiation factor IF-3.